A 530-amino-acid polypeptide reads, in one-letter code: Ubiquitin carboxyl-terminal hydrolase 17-like protein 11 (530 aa).

Positions 80–375 (AGLQNMGNTC…QAYVLFYIQK (296 aa)) constitute a USP domain. Cys-89 (nucleophile) is an active-site residue. The active-site Proton acceptor is the His-334. Composition is skewed to basic and acidic residues over residues 382-392 (SESVSRGREPR) and 398-413 (DTDR…RDHP). Disordered regions lie at residues 382–413 (SESV…RDHP) and 509–530 (RGRA…LVCQ). The span at 510 to 524 (GRARRSKGKNKHSKR) shows a compositional bias: basic residues.

This sequence belongs to the peptidase C19 family. USP17 subfamily.

Its subcellular location is the nucleus. The protein resides in the endoplasmic reticulum. The enzyme catalyses Thiol-dependent hydrolysis of ester, thioester, amide, peptide and isopeptide bonds formed by the C-terminal Gly of ubiquitin (a 76-residue protein attached to proteins as an intracellular targeting signal).. In terms of biological role, deubiquitinating enzyme that removes conjugated ubiquitin from specific proteins to regulate different cellular processes that may include cell proliferation, progression through the cell cycle, apoptosis, cell migration, and the cellular response to viral infection. This Homo sapiens (Human) protein is Ubiquitin carboxyl-terminal hydrolase 17-like protein 11 (USP17L11).